The chain runs to 203 residues: Mitotic spindle assembly checkpoint protein MAD2A (203 aa).

The HORMA domain occupies 14-196 (KGSTEIVTEF…TTIHKVESMV (183 aa)). The required for assuming the closed conformation and for interaction with cdc20 stretch occupies residues 194–203 (SMVAYKISND).

Belongs to the MAD2 family. In terms of assembly, interacts with cdc20.

It is found in the nucleus. It localises to the chromosome. The protein resides in the centromere. The protein localises to the kinetochore. Its subcellular location is the cytoplasm. Component of the spindle-assembly checkpoint that prevents the onset of anaphase until all chromosomes are properly aligned at the metaphase plate. Required for the execution of the mitotic checkpoint which monitors the process of kinetochore-spindle attachment and inhibits the activity of the anaphase promoting complex until all chromosomes are aligned at the metaphase plate. This chain is Mitotic spindle assembly checkpoint protein MAD2A (mad2l1-1), found in Dictyostelium discoideum (Social amoeba).